The sequence spans 151 residues: Nucleoside diphosphate kinase (151 aa).

ATP-binding residues include K10, F58, R86, T92, R103, and N113. The active-site Pros-phosphohistidine intermediate is H116.

Belongs to the NDK family. Homotetramer. Mg(2+) serves as cofactor.

It localises to the cytoplasm. It carries out the reaction dZDP + ATP = dZTP + ADP. It catalyses the reaction a 2'-deoxyribonucleoside 5'-diphosphate + ATP = a 2'-deoxyribonucleoside 5'-triphosphate + ADP. The catalysed reaction is a ribonucleoside 5'-diphosphate + ATP = a ribonucleoside 5'-triphosphate + ADP. It functions in the pathway purine metabolism. Major role in the synthesis of nucleoside triphosphates other than ATP. The ATP gamma phosphate is transferred to the NDP beta phosphate via a ping-pong mechanism, using a phosphorylated active-site intermediate. In terms of biological role, (Microbial infection) Catalyzes the phosphorylation of dZDP to dZTP, when the bacterium is infected by a phage that produces the substrate for the synthesis of dZTP (2- amino-2'-deoxyadenosine 5'-triphosphate), which is then used by the phage as a DNA polymerase substrate. In Synechococcus sp. (strain CC9605), this protein is Nucleoside diphosphate kinase.